Reading from the N-terminus, the 521-residue chain is MFRTITSRLAFSVRQAEETVKPRIAYAQRSGRRIKEKVALMQAKRKEAGETGAPEKPGKFVLKTGKGTRDYGPAQSALRNSVLQTVTETFNRYGAETIDTPVFELRDVLMGKYGEEGGKLVYDLQDQGGELLSLRYDLTVPFARYLAMNKITNITRYQIAKVYRRDQPVMSRGRYREFYQCDFDIAGQYDLMLPEAECLGIVDELLTKLEIGEFFINLNHRLILEGMFAVSGIPAKDFKTICSSVDKLDKTPWEDVEQEMINEKFLTKEQTGKLGELVRFRELNSDLNNLELLEKMSQLPDLGQNDKFKKGAEELKVLIEYLNVDGVTTVRYEPSLARGLDYYTGAIYEAVAPKALEGTAVENSEDTAGQPVGVGSVAAGGRYDGLVKMFDSKANVPCCGVSFGIERLFAIMEARQKVAIRTTQTEVYVASAQKNLVRDRKKLVKMLRSAGIKTEMALKANPKLLTQFQYAEERRIPLAIVIGEQELKDGVVKLRNVVTRDEQTIKLDQLITAVRDTLAAL.

Residues 137 to 139, Arg164, Gln180, Asp184, Arg338, and 342 to 343 each bind L-histidine; these read DLT and YY.

The protein belongs to the class-II aminoacyl-tRNA synthetase family.

The enzyme catalyses tRNA(His) + L-histidine + ATP = L-histidyl-tRNA(His) + AMP + diphosphate + H(+). Functionally, involved in protein synthesis. Catalyzes the specific attachment of an amino acid to its cognate tRNA in a 2 step reaction: the amino acid (AA) is first activated by ATP to form AA-AMP and then transferred to the acceptor end of the tRNA. Required for germ cell development. This chain is Histidine--tRNA ligase, found in Caenorhabditis elegans.